The primary structure comprises 572 residues: Phosphoenolpyruvate-protein phosphotransferase (572 aa).

Residue His190 is the Tele-phosphohistidine intermediate of the active site. Phosphoenolpyruvate-binding residues include Arg297 and Arg333. The Mg(2+) site is built by Glu432 and Asp456. Phosphoenolpyruvate-binding positions include Asn455–Asp456 and Arg466. Cys503 (proton donor) is an active-site residue.

It belongs to the PEP-utilizing enzyme family. In terms of assembly, homodimer. Requires Mg(2+) as cofactor.

The protein resides in the cytoplasm. It catalyses the reaction L-histidyl-[protein] + phosphoenolpyruvate = N(pros)-phospho-L-histidyl-[protein] + pyruvate. General (non sugar-specific) component of the phosphoenolpyruvate-dependent sugar phosphotransferase system (sugar PTS). This major carbohydrate active-transport system catalyzes the phosphorylation of incoming sugar substrates concomitantly with their translocation across the cell membrane. Enzyme I transfers the phosphoryl group from phosphoenolpyruvate (PEP) to the phosphoryl carrier protein (HPr). This Listeria monocytogenes serovar 1/2a (strain ATCC BAA-679 / EGD-e) protein is Phosphoenolpyruvate-protein phosphotransferase (ptsI).